The following is a 141-amino-acid chain: VLSEGNKKAIKNLLQKIHSQTEVLGAEALARLFECHPQTKSYFPKFSGFSANDKRVKHHGALVLKALVDTNKHLDDLPHHLNKLAEKHGKGLLVDPHNFKLFSDCIAVTLAAHLQEFSPETHCAVDKFLEEVTYQLSSLYR.

Residues 1 to 141 form the Globin domain; sequence VLSEGNKKAI…VTYQLSSLYR (141 aa). Residue His-59 coordinates O2. Heme b is bound at residue His-88.

This sequence belongs to the globin family. As to quaternary structure, heterotetramer of two alpha chains and two beta chains. In terms of tissue distribution, red blood cells.

Involved in oxygen transport from the lung to the various peripheral tissues. This chain is Hemoglobin subunit alpha-1, found in Torpedo marmorata (Marbled electric ray).